The following is a 337-amino-acid chain: Ketol-acid reductoisomerase (NADP(+)) (337 aa).

The KARI N-terminal Rossmann domain occupies 3–183; that stretch reads VEMFYDADAD…GGARAGVIKT (181 aa). NADP(+)-binding positions include 26-29, Lys49, Ser52, Ser54, and 84-87; these read YGSQ and DTAQ. Residue His109 is part of the active site. Gly135 is an NADP(+) binding site. Residues 184–329 form the KARI C-terminal knotted domain; the sequence is TFKEETETDL…KKLRDLMSWV (146 aa). Asp192, Glu196, Glu228, and Glu232 together coordinate Mg(2+). A substrate-binding site is contributed by Ser253.

It belongs to the ketol-acid reductoisomerase family. Mg(2+) is required as a cofactor.

The catalysed reaction is (2R)-2,3-dihydroxy-3-methylbutanoate + NADP(+) = (2S)-2-acetolactate + NADPH + H(+). It carries out the reaction (2R,3R)-2,3-dihydroxy-3-methylpentanoate + NADP(+) = (S)-2-ethyl-2-hydroxy-3-oxobutanoate + NADPH + H(+). It participates in amino-acid biosynthesis; L-isoleucine biosynthesis; L-isoleucine from 2-oxobutanoate: step 2/4. The protein operates within amino-acid biosynthesis; L-valine biosynthesis; L-valine from pyruvate: step 2/4. Involved in the biosynthesis of branched-chain amino acids (BCAA). Catalyzes an alkyl-migration followed by a ketol-acid reduction of (S)-2-acetolactate (S2AL) to yield (R)-2,3-dihydroxy-isovalerate. In the isomerase reaction, S2AL is rearranged via a Mg-dependent methyl migration to produce 3-hydroxy-3-methyl-2-ketobutyrate (HMKB). In the reductase reaction, this 2-ketoacid undergoes a metal-dependent reduction by NADPH to yield (R)-2,3-dihydroxy-isovalerate. This Mycolicibacterium vanbaalenii (strain DSM 7251 / JCM 13017 / BCRC 16820 / KCTC 9966 / NRRL B-24157 / PYR-1) (Mycobacterium vanbaalenii) protein is Ketol-acid reductoisomerase (NADP(+)).